The sequence spans 472 residues: Uronate isomerase (472 aa).

Belongs to the metallo-dependent hydrolases superfamily. Uronate isomerase family.

The enzyme catalyses D-glucuronate = D-fructuronate. It carries out the reaction aldehydo-D-galacturonate = keto-D-tagaturonate. It participates in carbohydrate metabolism; pentose and glucuronate interconversion. This is Uronate isomerase from Opitutus terrae (strain DSM 11246 / JCM 15787 / PB90-1).